A 419-amino-acid polypeptide reads, in one-letter code: Gamma-glutamyl phosphate reductase (419 aa).

Belongs to the gamma-glutamyl phosphate reductase family.

The protein localises to the cytoplasm. The enzyme catalyses L-glutamate 5-semialdehyde + phosphate + NADP(+) = L-glutamyl 5-phosphate + NADPH + H(+). The protein operates within amino-acid biosynthesis; L-proline biosynthesis; L-glutamate 5-semialdehyde from L-glutamate: step 2/2. In terms of biological role, catalyzes the NADPH-dependent reduction of L-glutamate 5-phosphate into L-glutamate 5-semialdehyde and phosphate. The product spontaneously undergoes cyclization to form 1-pyrroline-5-carboxylate. This chain is Gamma-glutamyl phosphate reductase, found in Solidesulfovibrio magneticus (strain ATCC 700980 / DSM 13731 / RS-1) (Desulfovibrio magneticus).